Consider the following 399-residue polypeptide: Zinc finger TRAF-type-containing protein 1 (399 aa).

Residues 1–13 (MSGAEEAGGGGPA) are compositionally biased toward gly residues. The tract at residues 1–21 (MSGAEEAGGGGPAAGPAGAVP) is disordered. The segment at 106–151 (CTVCLDLPKASVYQCTNGHLMCAGCFIHLLADARLKEEQATCPNCR) adopts an RING-type; degenerate zinc-finger fold. A TRAF-type zinc finger spans residues 152–210 (CEISKSLCCRNLAVEKAVSELPSECGFCLRQFPRSLLERHQKEECQDRVTQCKYKRIGC).

It belongs to the ZFTRAF1 family. In terms of assembly, interacts with LGALS3. As to expression, expressed in heart, brain, liver, testis and kidney.

The protein resides in the cytoplasm. Its subcellular location is the perinuclear region. The polypeptide is Zinc finger TRAF-type-containing protein 1 (Mus musculus (Mouse)).